The primary structure comprises 602 residues: Alpha-glucosides permease MPH3 (602 aa).

The Cytoplasmic segment spans residues Met1–Thr106. Residues Thr107–Phe127 form a helical membrane-spanning segment. At Gln128–Glu142 the chain is on the extracellular side. The chain crosses the membrane as a helical span at residues Ile143–Leu163. Residues Gln164–Thr178 are Cytoplasmic-facing. A helical transmembrane segment spans residues Leu179–Leu199. Position 200 (Gly200) is a topological domain, extracellular. The chain crosses the membrane as a helical span at residues Met201–Val221. Residues Ser222–Tyr234 lie on the Cytoplasmic side of the membrane. A helical transmembrane segment spans residues Tyr235–Met255. At Lys256–Lys270 the chain is on the extracellular side. The helical transmembrane segment at Leu271 to Pro291 threads the bilayer. Topologically, residues Glu292 to Arg363 are cytoplasmic. The chain crosses the membrane as a helical span at residues Ile364–Thr384. Topologically, residues Tyr385 to Ser397 are extracellular. Residues Phe398–Ala418 form a helical membrane-spanning segment. Over Ser419–Asp426 the chain is Cytoplasmic. The helical transmembrane segment at Leu427 to Cys447 threads the bilayer. The Extracellular portion of the chain corresponds to Ser448–Ser459. A helical transmembrane segment spans residues Leu460–Val480. Topologically, residues Ser481–Thr492 are cytoplasmic. The helical transmembrane segment at Ile493 to Tyr513 threads the bilayer. Residues Gln514–Lys525 are Extracellular-facing. A helical transmembrane segment spans residues Ser526–Pro546. Residues Glu547–Glu602 are Cytoplasmic-facing. The interval Lys580–Glu602 is disordered. A compositionally biased stretch (basic and acidic residues) spans Pro582–Ile595.

The protein belongs to the major facilitator superfamily. Sugar transporter (TC 2.A.1.1) family.

Its subcellular location is the cell membrane. In terms of biological role, high-affinity uptake of maltose and maltotriose. Also transports alpha-methylglucoside, glucose and turanose but not melezitose or trehalose. This Saccharomyces cerevisiae (strain AWRI1631) (Baker's yeast) protein is Alpha-glucosides permease MPH3 (MPH3).